An 86-amino-acid polypeptide reads, in one-letter code: Large ribosomal subunit protein uL24c (86 aa).

This sequence belongs to the universal ribosomal protein uL24 family. As to quaternary structure, part of the 50S ribosomal subunit.

The protein localises to the plastid. Its subcellular location is the chloroplast. One of two assembly initiator proteins, it binds directly to the 5'-end of the 23S rRNA, where it nucleates assembly of the 50S subunit. This Heterosigma akashiwo (strain NIES-293 / 8280G21-1) protein is Large ribosomal subunit protein uL24c (rpl24).